A 214-amino-acid chain; its full sequence is Thiamine-phosphate synthase (214 aa).

Residues 40–44 (QLREK) and asparagine 72 contribute to the 4-amino-2-methyl-5-(diphosphooxymethyl)pyrimidine site. Mg(2+) is bound by residues aspartate 73 and aspartate 92. Residue serine 110 participates in 4-amino-2-methyl-5-(diphosphooxymethyl)pyrimidine binding. 2-[(2R,5Z)-2-carboxy-4-methylthiazol-5(2H)-ylidene]ethyl phosphate is bound at residue 137-139 (SPT). Lysine 140 provides a ligand contact to 4-amino-2-methyl-5-(diphosphooxymethyl)pyrimidine. 2-[(2R,5Z)-2-carboxy-4-methylthiazol-5(2H)-ylidene]ethyl phosphate contacts are provided by residues glycine 167 and 185–186 (IS).

This sequence belongs to the thiamine-phosphate synthase family. The cofactor is Mg(2+).

It carries out the reaction 2-[(2R,5Z)-2-carboxy-4-methylthiazol-5(2H)-ylidene]ethyl phosphate + 4-amino-2-methyl-5-(diphosphooxymethyl)pyrimidine + 2 H(+) = thiamine phosphate + CO2 + diphosphate. It catalyses the reaction 2-(2-carboxy-4-methylthiazol-5-yl)ethyl phosphate + 4-amino-2-methyl-5-(diphosphooxymethyl)pyrimidine + 2 H(+) = thiamine phosphate + CO2 + diphosphate. The enzyme catalyses 4-methyl-5-(2-phosphooxyethyl)-thiazole + 4-amino-2-methyl-5-(diphosphooxymethyl)pyrimidine + H(+) = thiamine phosphate + diphosphate. It participates in cofactor biosynthesis; thiamine diphosphate biosynthesis; thiamine phosphate from 4-amino-2-methyl-5-diphosphomethylpyrimidine and 4-methyl-5-(2-phosphoethyl)-thiazole: step 1/1. Functionally, condenses 4-methyl-5-(beta-hydroxyethyl)thiazole monophosphate (THZ-P) and 2-methyl-4-amino-5-hydroxymethyl pyrimidine pyrophosphate (HMP-PP) to form thiamine monophosphate (TMP). The chain is Thiamine-phosphate synthase from Wolinella succinogenes (strain ATCC 29543 / DSM 1740 / CCUG 13145 / JCM 31913 / LMG 7466 / NCTC 11488 / FDC 602W) (Vibrio succinogenes).